The primary structure comprises 142 residues: Large ribosomal subunit protein uL13 (142 aa).

This sequence belongs to the universal ribosomal protein uL13 family. In terms of assembly, part of the 50S ribosomal subunit.

This protein is one of the early assembly proteins of the 50S ribosomal subunit, although it is not seen to bind rRNA by itself. It is important during the early stages of 50S assembly. The sequence is that of Large ribosomal subunit protein uL13 from Buchnera aphidicola subsp. Acyrthosiphon pisum (strain 5A).